Consider the following 322-residue polypeptide: Phospho-N-acetylmuramoyl-pentapeptide-transferase (322 aa).

10 consecutive transmembrane segments (helical) span residues 9–29, 54–74, 82–102, 122–142, 145–165, 176–196, 200–220, 227–247, 255–275, and 302–322; these read IALVSSLVLTVIFLPVLINFM, TMGGTIFVIAAVISVIWVAAW, VWILVISLLGYGIIGFLDDGI, IIIAVVIVLIASSDHFQFGLY, FAGVVHSIALFTIFIIFWLVG, LDGLATGLSIVAYGTYAYIAF, NFAVLAFCMSVIGGLIAFFIF, IFMGDAGSLALGGGLATVSIM, LLIGIVFVCETASVILQVISF, and VDIVFWLVGLICSILYLAIWG.

It belongs to the glycosyltransferase 4 family. MraY subfamily. It depends on Mg(2+) as a cofactor.

It localises to the cell membrane. The enzyme catalyses UDP-N-acetyl-alpha-D-muramoyl-L-alanyl-gamma-D-glutamyl-L-lysyl-D-alanyl-D-alanine + di-trans,octa-cis-undecaprenyl phosphate = Mur2Ac(oyl-L-Ala-gamma-D-Glu-L-Lys-D-Ala-D-Ala)-di-trans,octa-cis-undecaprenyl diphosphate + UMP. Its pathway is cell wall biogenesis; peptidoglycan biosynthesis. Its function is as follows. Catalyzes the initial step of the lipid cycle reactions in the biosynthesis of the cell wall peptidoglycan: transfers peptidoglycan precursor phospho-MurNAc-pentapeptide from UDP-MurNAc-pentapeptide onto the lipid carrier undecaprenyl phosphate, yielding undecaprenyl-pyrophosphoryl-MurNAc-pentapeptide, known as lipid I. This is Phospho-N-acetylmuramoyl-pentapeptide-transferase from Lactobacillus acidophilus (strain ATCC 700396 / NCK56 / N2 / NCFM).